Consider the following 391-residue polypeptide: Zinc finger protein ubi-d4 (391 aa).

Ala2 carries the N-acetylalanine modification. Glycyl lysine isopeptide (Lys-Gly) (interchain with G-Cter in SUMO2) cross-links involve residues Lys10, Lys99, Lys107, and Lys108. Disordered regions lie at residues 79 to 146 (WRKK…LGEF) and 165 to 196 (DDLD…ARKK). 2 stretches are compositionally biased toward basic and acidic residues: residues 100–110 (PDTDQTLKKEG) and 126–140 (DPLE…RVDD). A Phosphoserine modification is found at Ser142. Over residues 165–174 (DDLDDEDYEE) the composition is skewed to acidic residues. Tyr172 is modified (phosphotyrosine). Thr176 carries the phosphothreonine modification. Glycyl lysine isopeptide (Lys-Gly) (interchain with G-Cter in SUMO2) cross-links involve residues Lys178 and Lys196. Ser200 is subject to Phosphoserine. The C2H2-type zinc finger occupies 209–232 (YACDICGKRYKNRPGLSYHYAHSH). Positions 233-266 (LAEEEGEDKEDSQPPTPVSQRSEEQKSKKGPDGL) are disordered. A Phosphoserine modification is found at Ser244. Positions 253-263 (RSEEQKSKKGP) are enriched in basic and acidic residues. 2 consecutive PHD-type zinc fingers follow at residues 270 to 330 (NNYC…CKCC) and 327 to 377 (CKCC…CLDL). At Ser280 the chain carries Phosphoserine. Lys281 is covalently cross-linked (Glycyl lysine isopeptide (Lys-Gly) (interchain with G-Cter in SUMO2)).

This sequence belongs to the requiem/DPF family. Interacts with the nucleosomes, in particular nucleosomes bearing histone H3 crotonylated at 'Lys-14' (H3K14cr) for which DPF2 has high affinity. Also interacts (via PHD-type zinc finger domains) with histone H3 butyrylated at 'Lys-14' (H3K14bu), histone H3 propionylated at 'Lys-14' (H3K14pr), and histone H3 acetylated at 'Lys-14' (H3K14ac). Interacts with histone H3 acetylated at 'Lys-9' (H3K9ac), histone H3 di-methylated at 'Lys-9' (H3K9me2), and histone H3 tri-methylated at 'Lys-9' (H3K9me3). Interacts with histone H4 acetylated at 'Lys-12' (H4K12ac). Interacts with histone H4 acetylated at 'Lys-16' (H4K16ac). Interacts with SWI/SNF complex components. Interacts with SMARCA2, SMARCA4, SMARCB1 and SMARCD1. Interacts with SMARCC1, SMARCC2 and ACTL6A. Interacts with RUNX1. In terms of tissue distribution, ubiquitous.

It is found in the nucleus. The protein resides in the cytoplasm. In terms of biological role, plays an active role in transcriptional regulation by binding modified histones H3 and H4. Is a negative regulator of myeloid differentiation of hematopoietic progenitor cells. Might also have a role in the development and maturation of lymphoid cells. Involved in the regulation of non-canonical NF-kappa-B pathway. The chain is Zinc finger protein ubi-d4 (DPF2) from Homo sapiens (Human).